The primary structure comprises 229 residues: Large ribosomal subunit protein uL1 (229 aa).

The protein belongs to the universal ribosomal protein uL1 family. In terms of assembly, part of the 50S ribosomal subunit.

Binds directly to 23S rRNA. The L1 stalk is quite mobile in the ribosome, and is involved in E site tRNA release. In terms of biological role, protein L1 is also a translational repressor protein, it controls the translation of the L11 operon by binding to its mRNA. In Clostridium tetani (strain Massachusetts / E88), this protein is Large ribosomal subunit protein uL1.